The sequence spans 1201 residues: Zinc finger protein sdc-1 (1201 aa).

7 consecutive C2H2-type zinc fingers follow at residues 117–139 (LTCAHCDWSFDNVMKLVRHRGVH), 145–168 (YMCQVCLTLFGHTYNLFMHWRTSC), 233–254 (SSCHLCHLPVPNKFLEAHGNVH), 268–290 (YFCHICGTVFIEQDNLFKHWRLH), 486–513 (IVCHKCDSKKLTITFSTEVRLKYHLLRH), 521–543 (YHCAICKIIVYNRSHEEHWINDC), and 652–674 (VVCFHCGTRCHYTLLHDHLDYCH). The disordered stretch occupies residues 1164–1201 (KRRNSETREHELIELDTDDLNEPSTSDGRYSFGHHGYR). Residues 1167–1176 (NSETREHELI) are compositionally biased toward basic and acidic residues.

Component of the SDC complex, which consists of sdc-1, sdc-2 and sdc-3. Within the complex, interacts with sdc-2 and sdc-3.

It localises to the nucleus. The protein localises to the chromosome. In terms of biological role, embryonic transcription factor regulating downstream genes involved specifically in the sex determination and dosage compensation pathways, or regulating other genes involved in the coordinate control of both processes. Component of the SDC complex that functions in sex determination and in X chromosome dosage compensation specifically in hermaphrodite (XX) animals. Involved in the recruitment of the condensin I-like dosage compensation complex to the male sex-determining autosomal gene her-1, thereby contributing to its repression and initiating hermaphrodite sexual development. Similarly, might contribute to X-linked gene repression through recruitment of the dosage compensation complex to the X chromosomes in hermaphrodites. Seems to be involved in the depletion of histone H4 lysine 16 acetylation (H4K16ac) on dosage compensated X chromosomes. Plays a role in developmental rate and body fat regulation downstream of the TOR complex 2 pathway. This Caenorhabditis elegans protein is Zinc finger protein sdc-1 (sdc-1).